The following is a 119-amino-acid chain: MLPARNRMTRSTEFDATVKHGTRMAQPDIVVHLRRDSEPDDESAGPRVGLVVGKAVGTAVQRHRVARRLRHVARALLGELEPSDRLVIRALPGSRTASSARLAQELQRCLRRMPAGTGP.

This sequence belongs to the RnpA family. Consists of a catalytic RNA component (M1 or rnpB) and a protein subunit.

The enzyme catalyses Endonucleolytic cleavage of RNA, removing 5'-extranucleotides from tRNA precursor.. In terms of biological role, RNaseP catalyzes the removal of the 5'-leader sequence from pre-tRNA to produce the mature 5'-terminus. It can also cleave other RNA substrates such as 4.5S RNA. The protein component plays an auxiliary but essential role in vivo by binding to the 5'-leader sequence and broadening the substrate specificity of the ribozyme. The sequence is that of Ribonuclease P protein component from Mycobacterium avium (strain 104).